A 312-amino-acid chain; its full sequence is Pre-mRNA-splicing factor 38A (312 aa).

Residues 1 to 179 (MANRTVKDAH…VLEEAEQLEP (179 aa)) are N-terminal protein interaction domain. Phosphoserine is present on residues Ser-11, Ser-193, Ser-194, Ser-209, and Ser-226. A coiled-coil region spans residues 170–204 (VLEEAEQLEPRVSALEEDMDDVESSEEEEEEDEKL). Positions 181–312 (VSALEEDMDD…SHKKSRRGNE (132 aa)) are disordered. A compositionally biased stretch (acidic residues) spans 184–202 (LEEDMDDVESSEEEEEEDE). Residues 203–224 (KLERVPSPDHRRRSYRDLDKPR) are compositionally biased toward basic and acidic residues. 2 stretches are compositionally biased toward basic residues: residues 225–294 (RSPT…RSHS) and 301–312 (KKSHKKSRRGNE).

This sequence belongs to the PRP38 family. Component of the spliceosome B complex. Interacts (via N-terminal interaction domain) with ZMAT2 and MFAP1.

The protein localises to the nucleus. Involved in pre-mRNA splicing as a component of the spliceosome. The sequence is that of Pre-mRNA-splicing factor 38A (PRPF38A) from Bos taurus (Bovine).